The primary structure comprises 323 residues: CIMIP2 protein CG18335 (323 aa).

The protein belongs to the CIMIP2 family.

It is found in the cytoplasm. The protein resides in the cytoskeleton. It localises to the cilium axoneme. Functionally, probable microtubule inner protein (MIP) part of the dynein-decorated doublet microtubules (DMTs) in cilium axoneme. This chain is CIMIP2 protein CG18335, found in Drosophila melanogaster (Fruit fly).